The chain runs to 906 residues: Protein translocase subunit SecA (906 aa).

ATP-binding positions include glutamine 89, 107 to 111 (GEGKT), and aspartate 502. The Zn(2+) site is built by cysteine 885, cysteine 887, cysteine 896, and histidine 897.

Belongs to the SecA family. Monomer and homodimer. Part of the essential Sec protein translocation apparatus which comprises SecA, SecYEG and auxiliary proteins SecDF-YajC and YidC. Zn(2+) is required as a cofactor.

Its subcellular location is the cell inner membrane. It is found in the cytoplasm. It carries out the reaction ATP + H2O + cellular proteinSide 1 = ADP + phosphate + cellular proteinSide 2.. In terms of biological role, part of the Sec protein translocase complex. Interacts with the SecYEG preprotein conducting channel. Has a central role in coupling the hydrolysis of ATP to the transfer of proteins into and across the cell membrane, serving both as a receptor for the preprotein-SecB complex and as an ATP-driven molecular motor driving the stepwise translocation of polypeptide chains across the membrane. This Rhizobium rhizogenes (strain K84 / ATCC BAA-868) (Agrobacterium radiobacter) protein is Protein translocase subunit SecA.